Reading from the N-terminus, the 272-residue chain is Formamidopyrimidine-DNA glycosylase (272 aa).

Proline 2 serves as the catalytic Schiff-base intermediate with DNA. Glutamate 3 (proton donor) is an active-site residue. Lysine 58 acts as the Proton donor; for beta-elimination activity in catalysis. Histidine 93, arginine 112, and arginine 153 together coordinate DNA. The segment at histidine 238–arginine 272 adopts an FPG-type zinc-finger fold. Arginine 262 serves as the catalytic Proton donor; for delta-elimination activity.

This sequence belongs to the FPG family. Monomer. Zn(2+) serves as cofactor.

The enzyme catalyses Hydrolysis of DNA containing ring-opened 7-methylguanine residues, releasing 2,6-diamino-4-hydroxy-5-(N-methyl)formamidopyrimidine.. It carries out the reaction 2'-deoxyribonucleotide-(2'-deoxyribose 5'-phosphate)-2'-deoxyribonucleotide-DNA = a 3'-end 2'-deoxyribonucleotide-(2,3-dehydro-2,3-deoxyribose 5'-phosphate)-DNA + a 5'-end 5'-phospho-2'-deoxyribonucleoside-DNA + H(+). In terms of biological role, involved in base excision repair of DNA damaged by oxidation or by mutagenic agents. Acts as a DNA glycosylase that recognizes and removes damaged bases. Has a preference for oxidized purines, such as 7,8-dihydro-8-oxoguanine (8-oxoG). Has AP (apurinic/apyrimidinic) lyase activity and introduces nicks in the DNA strand. Cleaves the DNA backbone by beta-delta elimination to generate a single-strand break at the site of the removed base with both 3'- and 5'-phosphates. The polypeptide is Formamidopyrimidine-DNA glycosylase (Dichelobacter nodosus (strain VCS1703A)).